The primary structure comprises 258 residues: MPVAVRVIPCLDVKNGRVVKGVNFEGLKDAGDPVELAARYDAEGADELTFLDVSASQDGRGTMLEVVRRTADQVFIPLTVGGGVRSAEDVDQLLRAGADKVSVNTSAIARPELLQELSQRFGAQCVVLSVDARRVPEGGKPQPSGFEVTTHGGTRSAGIDAVEWAQKGEALGVGEILLNSMDGDGTKRGFDLELIEKVRHAVSIPVIASGGAGKPEDFPPAIASGADAVLAASIFHFGEVTISEVKKQVVAAGYEVRS.

Catalysis depends on residues Asp12 and Asp131.

It belongs to the HisA/HisF family. As to quaternary structure, heterodimer of HisH and HisF.

It is found in the cytoplasm. The enzyme catalyses 5-[(5-phospho-1-deoxy-D-ribulos-1-ylimino)methylamino]-1-(5-phospho-beta-D-ribosyl)imidazole-4-carboxamide + L-glutamine = D-erythro-1-(imidazol-4-yl)glycerol 3-phosphate + 5-amino-1-(5-phospho-beta-D-ribosyl)imidazole-4-carboxamide + L-glutamate + H(+). Its pathway is amino-acid biosynthesis; L-histidine biosynthesis; L-histidine from 5-phospho-alpha-D-ribose 1-diphosphate: step 5/9. Functionally, IGPS catalyzes the conversion of PRFAR and glutamine to IGP, AICAR and glutamate. The HisF subunit catalyzes the cyclization activity that produces IGP and AICAR from PRFAR using the ammonia provided by the HisH subunit. The sequence is that of Imidazole glycerol phosphate synthase subunit HisF from Corynebacterium diphtheriae (strain ATCC 700971 / NCTC 13129 / Biotype gravis).